We begin with the raw amino-acid sequence, 221 residues long: CASP-like protein 4C1 (221 aa).

Positions M1 to H21 are disordered. Topologically, residues M1–T54 are cytoplasmic. A helical membrane pass occupies residues A55 to A75. Residues T76 to Y101 are Extracellular-facing. The chain crosses the membrane as a helical span at residues V102 to W122. The Cytoplasmic segment spans residues Y123 to D144. The helical transmembrane segment at Q145–L165 threads the bilayer. Residues R166–E189 lie on the Extracellular side of the membrane. A helical transmembrane segment spans residues I190 to G210. The Cytoplasmic portion of the chain corresponds to Y211–P221.

Belongs to the Casparian strip membrane proteins (CASP) family. As to quaternary structure, homodimer and heterodimers.

It localises to the cell membrane. In Pteridium aquilinum subsp. aquilinum (Bracken fern), this protein is CASP-like protein 4C1.